The sequence spans 330 residues: Copper-containing nitrite reductase (330 aa).

2 consecutive Plastocyanin-like domains span residues 1–165 (GLPR…YDRV) and 166–330 (YTIG…PGPA). Cu cation-binding residues include H85, H90, H125, C126, H135, M140, and H296.

It belongs to the multicopper oxidase family. In terms of assembly, homotrimer. Cu(2+) is required as a cofactor. Requires Cu(+) as cofactor. The cofactor is FAD.

It localises to the periplasm. It carries out the reaction nitric oxide + Fe(III)-[cytochrome c] + H2O = Fe(II)-[cytochrome c] + nitrite + 2 H(+). Its pathway is nitrogen metabolism; nitrate reduction (denitrification); dinitrogen from nitrate: step 2/4. This chain is Copper-containing nitrite reductase (nirK), found in Alcaligenes xylosoxydans xylosoxydans (Achromobacter xylosoxidans).